The following is a 541-amino-acid chain: ATP synthase subunit alpha (541 aa).

Position 169-176 (169-176 (GDRQTGKT)) interacts with ATP. The segment at 506 to 541 (NTLLNVEEGDTGEEENNEGHNKAEQDTEEKDTEEVV) is disordered. Composition is skewed to acidic residues over residues 512 to 521 (EEGDTGEEEN) and 531 to 541 (DTEEKDTEEVV).

It belongs to the ATPase alpha/beta chains family. As to quaternary structure, F-type ATPases have 2 components, CF(1) - the catalytic core - and CF(0) - the membrane proton channel. CF(1) has five subunits: alpha(3), beta(3), gamma(1), delta(1), epsilon(1). CF(0) has three main subunits: a(1), b(2) and c(9-12). The alpha and beta chains form an alternating ring which encloses part of the gamma chain. CF(1) is attached to CF(0) by a central stalk formed by the gamma and epsilon chains, while a peripheral stalk is formed by the delta and b chains.

Its subcellular location is the cell inner membrane. The catalysed reaction is ATP + H2O + 4 H(+)(in) = ADP + phosphate + 5 H(+)(out). Functionally, produces ATP from ADP in the presence of a proton gradient across the membrane. The alpha chain is a regulatory subunit. This chain is ATP synthase subunit alpha, found in Halothermothrix orenii (strain H 168 / OCM 544 / DSM 9562).